A 307-amino-acid polypeptide reads, in one-letter code: Cytochrome c1 1, heme protein, mitochondrial (307 aa).

The N-terminal 64 residues, 1–64 (MVGGGVIQQI…LLSFSTVASA (64 aa)), are a transit peptide targeting the mitochondrion. Over 65–270 (DEAEHGLESP…EPEMEERKLM (206 aa)) the chain is Mitochondrial intermembrane. Residues 90-246 (ASIRRGHQVY…YEDGVPATEA (157 aa)) form the Cytochrome c domain. Residues cysteine 103, cysteine 106, histidine 107, and methionine 226 each contribute to the heme c site. Residues 271 to 288 (GFKWIFLLSLALLQAAYY) traverse the membrane as a helical segment. Topologically, residues 289 to 307 (RRLKWSVLKSRKLVLDVVN) are mitochondrial matrix.

This sequence belongs to the cytochrome c family. As to quaternary structure, component of the ubiquinol-cytochrome c oxidoreductase (cytochrome b-c1 complex, complex III, CIII), a multisubunit enzyme composed of 10 subunits. The complex is composed of 3 respiratory subunits cytochrome b (MT-CYB), cytochrome c1 (CYC1-1 or CYC1-2) and Rieske protein (UCR1-1 or UCR1-2), 2 core protein subunits MPPalpha1 (or MPPalpha2) and MPPB, and 5 low-molecular weight protein subunits QCR7-1 (or QCR7-2), UCRQ-1 (or UCRQ-2), QCR9, UCRY and probably QCR6-1 (or QCR6-2). The complex exists as an obligatory dimer and forms supercomplexes (SCs) in the inner mitochondrial membrane with NADH-ubiquinone oxidoreductase (complex I, CI), resulting in different assemblies (supercomplexes SCI(1)III(2) and SCI(2)III(4)). Binds 1 heme c group covalently per subunit.

It is found in the mitochondrion inner membrane. Its function is as follows. Component of the ubiquinol-cytochrome c oxidoreductase, a multisubunit transmembrane complex that is part of the mitochondrial electron transport chain which drives oxidative phosphorylation. The respiratory chain contains 3 multisubunit complexes succinate dehydrogenase (complex II, CII), ubiquinol-cytochrome c oxidoreductase (cytochrome b-c1 complex, complex III, CIII) and cytochrome c oxidase (complex IV, CIV), that cooperate to transfer electrons derived from NADH and succinate to molecular oxygen, creating an electrochemical gradient over the inner membrane that drives transmembrane transport and the ATP synthase. The cytochrome b-c1 complex catalyzes electron transfer from ubiquinol to cytochrome c, linking this redox reaction to translocation of protons across the mitochondrial inner membrane, with protons being carried across the membrane as hydrogens on the quinol. In the process called Q cycle, 2 protons are consumed from the matrix, 4 protons are released into the intermembrane space and 2 electrons are passed to cytochrome c. Cytochrome c1 is a catalytic core subunit containing a c-type heme. It transfers electrons from the [2Fe-2S] iron-sulfur cluster of the Rieske protein to cytochrome c. The polypeptide is Cytochrome c1 1, heme protein, mitochondrial (CYC1-1) (Arabidopsis thaliana (Mouse-ear cress)).